A 205-amino-acid polypeptide reads, in one-letter code: Recombination protein RecR (205 aa).

Residues 58 to 75 (CSECQNVTDRDSDPCVLC) form a C4-type zinc finger. In terms of domain architecture, Toprim spans 83-182 (TVICVVESPV…AVSKIARGIP (100 aa)).

Belongs to the RecR family.

In terms of biological role, may play a role in DNA repair. It seems to be involved in an RecBC-independent recombinational process of DNA repair. It may act with RecF and RecO. In Chlorobium phaeobacteroides (strain DSM 266 / SMG 266 / 2430), this protein is Recombination protein RecR.